A 281-amino-acid chain; its full sequence is MAQKIIRVGDIEIANDKPMVLFGGMNVLESRDMAMQVCEEYVKVTEKLGIPYVFKASFDKANRSSVTSYRGPGLEEGMRIFQDIKQAFGVPIITDVHEPDQAAVVAEVCDIIQLPAFLSRQTDLVVAMAKTNAVINIKKAQFLAPQEMKHILNKCVEAGNDQLILCERGSSFGYNNLVVDMLGFGIMKQFEYPVFFDVTHSLQMPGGRSDSAGGRRAQVTDLAKAGMSQSLAGLFLEAHPDPDNAKCDGPCALRLDKLEPFLAQLKALDELVKSFPTVETA.

This sequence belongs to the KdsA family.

The protein resides in the cytoplasm. The enzyme catalyses D-arabinose 5-phosphate + phosphoenolpyruvate + H2O = 3-deoxy-alpha-D-manno-2-octulosonate-8-phosphate + phosphate. The protein operates within carbohydrate biosynthesis; 3-deoxy-D-manno-octulosonate biosynthesis; 3-deoxy-D-manno-octulosonate from D-ribulose 5-phosphate: step 2/3. Its pathway is bacterial outer membrane biogenesis; lipopolysaccharide biosynthesis. This chain is 2-dehydro-3-deoxyphosphooctonate aldolase, found in Pseudomonas fluorescens (strain Pf0-1).